Reading from the N-terminus, the 355-residue chain is DNA-binding protein RHL1 (355 aa).

Disordered regions lie at residues 1–26 (MVRA…KQRK), 181–215 (DFQG…VDNE), and 229–355 (IQVT…SSKA). Basic and acidic residues predominate over residues 14–23 (GGDKDDAESK). Composition is skewed to low complexity over residues 230–246 (QVTP…VTPV) and 260–274 (AETS…SEGN). 2 stretches are compositionally biased toward basic and acidic residues: residues 281-296 (KPLL…REES) and 309-326 (LPEE…KDSK). Residues 344–355 (AGTSKAKSSSKA) show a composition bias toward low complexity.

Interacts with BIN4 and TOP6A, but not with TOP6B. In terms of tissue distribution, expressed inproliferating and endoreduplicating cells.

It is found in the nucleus. Component of the DNA topoisomerase VI complex involved in chromatin organization and progression of endoreduplication cycles. Binds to DNA. Required for endoreduplication beyond 8C. The polypeptide is DNA-binding protein RHL1 (RHL1) (Arabidopsis thaliana (Mouse-ear cress)).